Here is a 249-residue protein sequence, read N- to C-terminus: 5'-nucleotidase SurE (249 aa).

The a divalent metal cation site is built by Asp-8, Asp-9, Ser-39, and Asn-91.

Belongs to the SurE nucleotidase family. It depends on a divalent metal cation as a cofactor.

The protein resides in the cytoplasm. It carries out the reaction a ribonucleoside 5'-phosphate + H2O = a ribonucleoside + phosphate. Nucleotidase that shows phosphatase activity on nucleoside 5'-monophosphates. This is 5'-nucleotidase SurE from Pseudomonas aeruginosa (strain UCBPP-PA14).